The chain runs to 151 residues: 4-hydroxybenzoyl-CoA thioesterase (151 aa).

The active site involves Glu73. A substrate-binding site is contributed by 100 to 102 (FFR).

It belongs to the thioesterase PaaI family. Homotetramer.

The enzyme catalyses 4-hydroxybenzoyl-CoA + H2O = 4-hydroxybenzoate + CoA + H(+). Its pathway is xenobiotic degradation; 4-chlorobenzoate degradation; 4-hydroxybenzoate from 4-chlorobenzoate: step 3/3. The polypeptide is 4-hydroxybenzoyl-CoA thioesterase (Arthrobacter globiformis).